The chain runs to 389 residues: S-adenosylmethionine synthase 2 (389 aa).

His17 contacts ATP. Position 19 (Asp19) interacts with Mg(2+). K(+) is bound at residue Glu45. Positions 58 and 102 each coordinate L-methionine. The flexible loop stretch occupies residues Gln102–Ala112. ATP contacts are provided by residues Asp166–Lys168, Arg231–Phe232, Asp240, Arg246–Lys247, Ala263, and Lys267. Asp240 lines the L-methionine pocket. Lys271 contributes to the L-methionine binding site.

This sequence belongs to the AdoMet synthase family. As to quaternary structure, homotetramer; dimer of dimers. Requires Mg(2+) as cofactor. The cofactor is K(+).

It is found in the cytoplasm. It catalyses the reaction L-methionine + ATP + H2O = S-adenosyl-L-methionine + phosphate + diphosphate. It participates in amino-acid biosynthesis; S-adenosyl-L-methionine biosynthesis; S-adenosyl-L-methionine from L-methionine: step 1/1. Its function is as follows. Catalyzes the formation of S-adenosylmethionine (AdoMet) from methionine and ATP. The overall synthetic reaction is composed of two sequential steps, AdoMet formation and the subsequent tripolyphosphate hydrolysis which occurs prior to release of AdoMet from the enzyme. This is S-adenosylmethionine synthase 2 from Rhodospirillum rubrum (strain ATCC 11170 / ATH 1.1.1 / DSM 467 / LMG 4362 / NCIMB 8255 / S1).